The chain runs to 249 residues: Probable GDP-mannose transporter 2 (249 aa).

The Lumenal portion of the chain corresponds to 1–15 (MIYTSSKSLQYLAVP). Residues 16 to 36 (IYTIFKNLTIILIAYGEVLFF) form a helical membrane-spanning segment. Residues 37–47 (GGKVTSMELTS) are Cytoplasmic-facing. Residues 48-68 (FIMMVLSSVVATWGDQQAIAI) form a helical membrane-spanning segment. Residues 69 to 84 (KASSLEDLDQELVEST) are Lumenal-facing. Residues 85–105 (IFVLNPGYLWMFTNCISSALF) form a helical membrane-spanning segment. Residues 106–122 (VLIMRKRIRLTNFKDYD) lie on the Cytoplasmic side of the membrane. Residues 123–143 (TMFYNNVLALPLLLVFSFIME) traverse the membrane as a helical segment. The Lumenal portion of the chain corresponds to 144–159 (DWSTKNLSVNLSADSL). Residues asparagine 149 and asparagine 153 are each glycosylated (N-linked (GlcNAc...) asparagine). A helical transmembrane segment spans residues 160–180 (AAMVISGLMSVGISYCSGWCV). Residues 181 to 186 (RVTSST) lie on the Cytoplasmic side of the membrane. A helical membrane pass occupies residues 187-207 (TYSMVGALNKLPIALAGLVFF). The Lumenal segment spans residues 208–211 (DAPK). A helical membrane pass occupies residues 212–232 (NFLSFFSIFLGFLSGLLYAVA). At 233 to 249 (KQKKIQQQKVLAATLEK) the chain is on the cytoplasmic side.

This sequence belongs to the TPT transporter family. SLC35D subfamily.

Its subcellular location is the golgi apparatus membrane. The protein resides in the cytoplasmic vesicle membrane. It is found in the endoplasmic reticulum membrane. Functionally, involved in the import of GDP-mannose from the cytoplasm into the Golgi lumen. This chain is Probable GDP-mannose transporter 2 (HVG1), found in Saccharomyces cerevisiae (strain RM11-1a) (Baker's yeast).